The primary structure comprises 134 residues: C-C motif chemokine 21 (134 aa).

Positions 1–23 (MAQSLALSLLILVLAFGIPRTQG) are cleaved as a signal peptide. 3 cysteine pairs are disulfide-bonded: Cys31/Cys57, Cys32/Cys75, and Cys103/Cys122. Residues 88–134 (QHLDKTPSPQKPAQGCRKDRGASKTGKKGKGSKGCKRTERSQTPKGP) are disordered. Residues 98-134 (KPAQGCRKDRGASKTGKKGKGSKGCKRTERSQTPKGP) are C-terminal basic extension. Residues 112–122 (TGKKGKGSKGC) show a composition bias toward basic residues. The span at 123–134 (KRTERSQTPKGP) shows a compositional bias: basic and acidic residues.

The protein belongs to the intercrine beta (chemokine CC) family. Monomer. Binds to CCR7. Interacts with PDPN; relocalizes PDPN to the basolateral membrane. Interacts with TNFAIP6 (via Link domain). Interacts with GPR174. Highly expressed in high endothelial venules of lymph nodes, spleen and appendix. Intermediate levels found in small intestine, thyroid gland and trachea. Low level expression in thymus, bone marrow, liver, and pancreas. Also found in tonsil, fetal heart and fetal spleen.

Its subcellular location is the secreted. Inhibits hemopoiesis and stimulates chemotaxis. Chemotactic in vitro for thymocytes and activated T-cells, but not for B-cells, macrophages, or neutrophils. Shows preferential activity towards naive T-cells. May play a role in mediating homing of lymphocytes to secondary lymphoid organs. Binds to atypical chemokine receptor ACKR4 and mediates the recruitment of beta-arrestin (ARRB1/2) to ACKR4. This is C-C motif chemokine 21 (CCL21) from Homo sapiens (Human).